Consider the following 61-residue polypeptide: Small ribosomal subunit protein uS14 (61 aa).

Residues Cys-24, Cys-27, Cys-40, and Cys-43 each coordinate Zn(2+).

It belongs to the universal ribosomal protein uS14 family. Zinc-binding uS14 subfamily. As to quaternary structure, part of the 30S ribosomal subunit. Contacts proteins S3 and S10. Requires Zn(2+) as cofactor.

Functionally, binds 16S rRNA, required for the assembly of 30S particles and may also be responsible for determining the conformation of the 16S rRNA at the A site. This Caldicellulosiruptor bescii (strain ATCC BAA-1888 / DSM 6725 / KCTC 15123 / Z-1320) (Anaerocellum thermophilum) protein is Small ribosomal subunit protein uS14.